We begin with the raw amino-acid sequence, 415 residues long: Serine/threonine transporter SstT (415 aa).

The next 8 helical transmembrane spans lie at 23-43, 47-67, 85-105, 144-164, 181-201, 220-240, 293-313, and 333-353; these read ILIG…AAIA, LGTL…LMLV, ILFL…LFSF, ALLN…GFAL, AVTF…FGLV, LLVL…LLVF, IPLG…VLTL, and VVAS…LLLI.

This sequence belongs to the dicarboxylate/amino acid:cation symporter (DAACS) (TC 2.A.23) family.

It localises to the cell inner membrane. The catalysed reaction is L-serine(in) + Na(+)(in) = L-serine(out) + Na(+)(out). It catalyses the reaction L-threonine(in) + Na(+)(in) = L-threonine(out) + Na(+)(out). Involved in the import of serine and threonine into the cell, with the concomitant import of sodium (symport system). The protein is Serine/threonine transporter SstT of Klebsiella pneumoniae subsp. pneumoniae (strain ATCC 700721 / MGH 78578).